The sequence spans 414 residues: Light-independent protochlorophyllide reductase subunit N (414 aa).

Residues C16, C41, and C98 each coordinate [4Fe-4S] cluster.

The protein belongs to the BchN/ChlN family. In terms of assembly, protochlorophyllide reductase is composed of three subunits; BchL, BchN and BchB. Forms a heterotetramer of two BchB and two BchN subunits. [4Fe-4S] cluster is required as a cofactor.

It catalyses the reaction chlorophyllide a + oxidized 2[4Fe-4S]-[ferredoxin] + 2 ADP + 2 phosphate = protochlorophyllide a + reduced 2[4Fe-4S]-[ferredoxin] + 2 ATP + 2 H2O. It participates in porphyrin-containing compound metabolism; bacteriochlorophyll biosynthesis (light-independent). Its function is as follows. Component of the dark-operative protochlorophyllide reductase (DPOR) that uses Mg-ATP and reduced ferredoxin to reduce ring D of protochlorophyllide (Pchlide) to form chlorophyllide a (Chlide). This reaction is light-independent. The NB-protein (BchN-BchB) is the catalytic component of the complex. The polypeptide is Light-independent protochlorophyllide reductase subunit N (Roseiflexus castenholzii (strain DSM 13941 / HLO8)).